Reading from the N-terminus, the 3020-residue chain is MASQQDSGFFEISIKYLLKSWSNASPVGNGYIKPPVPPASGTHREKGPPAMLPINVDPDSKPGEYVLKSLFVNFTTQAERKIRIIMAEPLEKPLTKSLQRGEDPQFDQVISSMSSLSEYCLPSILRTLFDWYKRQNGIEDESHEYRPRTSNKSKSDEQQRDYLMERRDLAIDFIFSLVLIEVLKQIPLHPVIDSLIHDIINLAFKHFKYKEGYLGPNTGNMHIVADLYAEVIGVLAQAKFPAVKKKFMAELKELRHKEQSPYVVQSIISLIMGMKFFRIKMYPVEDFEASLQFMQECAHYFLEVKDKDIKHALAGLFVEILVPVAAAVKNEVNVPCLRNFVESLYDTTLELSSRKKHSLALYPLVTCLLCVSQKQLFLNRWHVFLNNCLSNLKNKDPKMARVALESLYRLLWVYMIRIKCESNTATQSRLITITTTLFPKGSRGVVPRDMPLNIFVKIIQFIAQERLDFAMKEIIFDFLCVGKPAKAFSLNPERMNIGLRAFLVIADSLQQKDGEPPMPVTGAVLPSGNTLRVKKTYLSKTLTEEEAKMIGMSLYYSQVRKAVGNILRHLDKEVGRCMMLTNVQMLNKEPEDMITGERKPKIDLFRTCVAAIPRLLPDGMSKLELIDLLARLSIHMDDELRHIAQNSLQGLLVDFSDWREDVLFGFTNFLLREVNDMHHTLLDSSLKLLLQLLTQWKLVIQTQGRAYEQANKIRNSELIPNGSSHRMQSERGPHCSVLHAVEGFALVLLCSFQVATRKLSVLILKEIRALFLALGQPEDDDRPMIDVMDQLSSSILESFIHVAVSDSATLPPTHNVDLQWLVEWNAVLVNSHYDVKSPSHVWIFAQSVKDPWVLCLFSFLRQENLPKHCPTALSYAWPYAFTRLQSVMPLVDPNSPVNAKKTSTASSGDNYVTLWRNYLILCFGVAKPSIMSPGHLRASTPEIMATTPDGTVSYDNKAIGTPSVGVLLKQLVPLMRLESIEITESLVLGFGRTNSLVFRELVEELHPLMKEALERRPENKKRRERRDLLRLQLLRIFELLADAGVISDSTNGALERDTLALGALFLEYVDLTRMLLEAENDKEVEILKDIRAHFSAMVANLIQCVPVHHRRFLFPQQSLRHHLFILFSQWAGPFSIMFTPLDRYSDRNHQITRYQYCALKAMSAVLCCGPVFDNVGLSPDGYLYKWLDNILACQDLRVHQLGCEVVMLLLELNPDQINLFNWAIDRCYTGSYQLASGCFKAIATVCGNRNYPFDIVTLLNLVLFKASDTNREIYEVSMQLMQILEAKLFVHSKKVAEQRPGSILYGTHGPLPPLYSVSLALLSCELARMYPELTLPLFSEVSQRFPTTHPNGRQIMLTYLLPWLHNIELVDSRLLLPGSSPSSPEDEVKDREGEVTASHGLKGNGWGSPEATSLVLNNLMYMTAKYGDEVPGAEMENAWNALANNEKWSNNLRVTLQFLISLCGVSSDTILLPYIKKVATYLCRNNTIQTMEELLFELQQTEPVNPIVQHCDNPPFYRFTASSKASAAASGTTSSSNTVVAGQDSFPDPEESKILKESDDRFSNVIRAHTRLESRYSNSSGGSYDEDKNDPISPYTGWLLSITEAKQPQPLPMPCSGGCWAPLVDYLPETITPRGPLHRCNIAVIFMTEMVVDHSVREDWALHLPLLLHAVFLGLDHYRPEVFEHSKKLLLHLLIALSCNSNFHAIASVLLQTREMGEAKTLTMQPAYQPEYLYTGGFDFLREDQSSPVPDSGLNSSSTSSSISLGGSSGNLPQMTQEVEDVEAATETDEKASKLIEFLTTRAFGPLWCHEDITPKNQNSKSAEQLSNFLRHVVSVFKDSRSGFHLEQHLSEVALQTALASSSRHYAGRSFQIFRALKQPLSAHALSDLLSRLVEVIGEHGDEIQGYVMEALLTLEAAVDNLSDCLKNSDLFTVLSRSSSPDLSSSSKLTASRKSTGQLNVNPGTPGSGGGGGGSGNTTTAERSRHQRSFSVPKKFGVVDRSSDPPRSATLDRIQACTQQGLSSKTRSNSSLKESLTDPSHVSHPTNLLATIFWVTVALMESDFEFEYLMALRLLNRLLAHMPLEKAENREKLEKLQAQLKWADFPGLQQLLLKGFTSLTTTDLTLQLFSLLTSVSKVPMVDSSQAIGFPLNVLCLLPQLIQHFENPNQFCKDIAERIAQVCLEEKNPKLSNLAHVMTLYKTHSYTRDCATWVNVVCRYLHEAYADITLNMVTYLAELLEKGLPSMQQPLLQVIYSLLSYMDLSVVPVKQFNMEVLKTIEKYVQSIHWREALNILKLVVSRSASLVLPSYQHSDLSKIELHRVWTSASKELPGKTLDFHFDISETPIIGRRYDELQNSSGRDGKPRAMAVTRSASSTSSGSNSNVLVPVSWKRPQYSQKRTKEKLVHVLSLCGQEVGLSKNPSVIFSSCGDLDLPEHQTSLVSSEDGPREQENMDDTNSEQQFRVFRDFDFLDVELEDGEGESMDNFNWGVRRRSLDSLDKCDMQILEERQLSRSTPSLNKMSHEDSDESSEEDLTASQILEHSDLIMNLSPSEEANPMELLTSACDSAPADPHSFNTRMANFEASLPDINNLQISEGSKAEAVPEEEDTTVHEDDLSSSINELPAAFECSDSFSLDMTEAEEKGNRGLDQYTLASFGEGDRGVSPPPSPFFSAILAAFQPAACDDAEEAWRSHINQLMCDSDGSCAVYTFHVFSSLFKNIQKRFCFLTCDAASYLGDNLRGIGSKFVSSSQMLTSCSECPTLFVDAETLLSCGLLDKLKFSVLELQEYLDTYNNRKEATLSWLANCKATFAGGSRDGVITCQPGDSEEKQLELCQRLYKLHFQLLLLYQSYCKLIGQVHEVSSVPELLNMSRELSDLKRNLKEATAAIATDPLYIEGAWSEPTFTSTEAAIQSMLECLKNNELGKALRQIKECRSLWPNDIFGSSSDDEVQTLLNIYFRHQTLGQTGTYALVGSNHSLTEICTKLMELNMEIRDMIRRAQNYRVLTAFLPDSSVSGTSL.

Y213 carries the post-translational modification Phosphotyrosine. 3 disordered regions span residues 1378 to 1404 (GSSP…LKGN), 1529 to 1554 (ASGT…ESKI), and 1746 to 1773 (SSPV…GNLP). A phosphoserine mark is found at S1382 and S1383. Positions 1752–1772 (SGLNSSSTSSSISLGGSSGNL) are enriched in low complexity. Residues S1936 and S1940 each carry the phosphoserine modification. Positions 1937 to 1956 (RSSSPDLSSSSKLTASRKST) are enriched in low complexity. Disordered regions lie at residues 1937–2042 (RSSS…PSHV) and 2355–2384 (LQNS…SNSN). The segment covering 1966 to 1976 (PGSGGGGGGSG) has biased composition (gly residues). Residues 2016–2042 (ACTQQGLSSKTRSNSSLKESLTDPSHV) show a composition bias toward polar residues. Low complexity predominate over residues 2369–2384 (AVTRSASSTSSGSNSN). S2427 and S2428 each carry phosphoserine. The tract at residues 2439–2458 (TSLVSSEDGPREQENMDDTN) is disordered. A Phosphoserine modification is found at S2495. Positions 2508 to 2535 (EERQLSRSTPSLNKMSHEDSDESSEEDL) are disordered. A Phosphothreonine; by CDK1 modification is found at T2516. Acidic residues predominate over residues 2526 to 2535 (DSDESSEEDL). Residue S2815 is modified to Phosphoserine.

The protein belongs to the furry protein family. In terms of assembly, when phosphorylated by CDK1, interacts with PLK1; this interaction occurs in mitotic cells, but not in interphase cells, and leads to further FRY phosphorylation by PLK1. In terms of processing, phosphorylated by AURKA, CDK1 and PLK1.

It is found in the cytoplasm. The protein localises to the cytoskeleton. The protein resides in the microtubule organizing center. It localises to the centrosome. Its subcellular location is the spindle pole. In terms of biological role, plays a crucial role in the structural integrity of mitotic centrosomes and in the maintenance of spindle bipolarity by promoting PLK1 activity at the spindle poles in early mitosis. May function as a scaffold promoting the interaction between AURKA and PLK1, thereby enhancing AURKA-mediated PLK1 phosphorylation. This is Protein furry homolog (Fry) from Mus musculus (Mouse).